Consider the following 106-residue polypeptide: Defensin-like protein 1 (106 aa).

A signal peptide spans 1 to 25 (MARSLCFMAFAVLAMMLFVAYEVQA). Disulfide bonds link cysteine 29–cysteine 73, cysteine 40–cysteine 60, cysteine 46–cysteine 67, and cysteine 50–cysteine 69.

It belongs to the DEFL family.

Its subcellular location is the secreted. The protein localises to the vacuole. The polypeptide is Defensin-like protein 1 (THIO1) (Nicotiana paniculata).